The sequence spans 887 residues: Alanine--tRNA ligase (887 aa).

H575, H579, C677, and H681 together coordinate Zn(2+).

Belongs to the class-II aminoacyl-tRNA synthetase family. It depends on Zn(2+) as a cofactor.

It localises to the cytoplasm. It catalyses the reaction tRNA(Ala) + L-alanine + ATP = L-alanyl-tRNA(Ala) + AMP + diphosphate. Functionally, catalyzes the attachment of alanine to tRNA(Ala) in a two-step reaction: alanine is first activated by ATP to form Ala-AMP and then transferred to the acceptor end of tRNA(Ala). Also edits incorrectly charged Ser-tRNA(Ala) and Gly-tRNA(Ala) via its editing domain. The polypeptide is Alanine--tRNA ligase (Geobacillus kaustophilus (strain HTA426)).